The following is a 47-amino-acid chain: Delta-actitoxin-Aspp1a (47 aa).

Intrachain disulfides connect Cys-4–Cys-44, Cys-6–Cys-34, and Cys-27–Cys-45.

The protein belongs to the sea anemone sodium channel inhibitory toxin family. Type I subfamily.

It localises to the secreted. Its subcellular location is the nematocyst. Binds specifically to voltage-gated sodium channels (Nav) (site 3), thereby delaying their inactivation during signal transduction. Has a heart stimulation effect on isolated rat atria that is higher than that of Hk7a, Hk8a and Hk16a. This chain is Delta-actitoxin-Aspp1a, found in Anthopleura sp. (strain 'Zhanjiang') (Sea anemone).